The sequence spans 351 residues: MSELPPYDSFLLVSFGGPEGQDDVMPFLENVLRGKNVPRERMLEVAEHYKHFGGVSPINEQNRQLIAALQKRFDANGIDLPIYWGNRNWDPYFADTLRQMKADGKKRSLAFFTSMFSCYSGCRQYRENIIQAREEVGEGAPLVEKVRMGFNHPGFIAAMADNVSKAAQTIGASPARTKVLFTAHSIPMGMADNCDYEKQLRESCRLVADACGAVDWDLVYQSRSGPPSQPWLEPDVLDAIAEMDDAKKLESLVILPIGFVSDHMEVLFDLDEEAAQLCRERGIKMARASAAGTHPDFVEMICGLVQERLGKLNEKPALGELGPWHDVCPQDCCLYTPRRPPVAGGRPVQAN.

Residues histidine 184 and glutamate 265 each coordinate Fe cation.

This sequence belongs to the ferrochelatase family.

The protein resides in the cytoplasm. It catalyses the reaction heme b + 2 H(+) = protoporphyrin IX + Fe(2+). It participates in porphyrin-containing compound metabolism; protoheme biosynthesis; protoheme from protoporphyrin-IX: step 1/1. Functionally, catalyzes the ferrous insertion into protoporphyrin IX. The chain is Ferrochelatase from Rhodopirellula baltica (strain DSM 10527 / NCIMB 13988 / SH1).